Here is a 162-residue protein sequence, read N- to C-terminus: 2-C-methyl-D-erythritol 2,4-cyclodiphosphate synthase (162 aa).

Residues aspartate 12 and histidine 14 each coordinate a divalent metal cation. Residues 12 to 14 (DVH) and 38 to 39 (HS) each bind 4-CDP-2-C-methyl-D-erythritol 2-phosphate. Residue histidine 46 participates in a divalent metal cation binding. 4-CDP-2-C-methyl-D-erythritol 2-phosphate contacts are provided by residues 60–62 (DIG), 136–139 (TTTE), phenylalanine 143, and arginine 146.

This sequence belongs to the IspF family. Homotrimer. A divalent metal cation is required as a cofactor.

The catalysed reaction is 4-CDP-2-C-methyl-D-erythritol 2-phosphate = 2-C-methyl-D-erythritol 2,4-cyclic diphosphate + CMP. It functions in the pathway isoprenoid biosynthesis; isopentenyl diphosphate biosynthesis via DXP pathway; isopentenyl diphosphate from 1-deoxy-D-xylulose 5-phosphate: step 4/6. Functionally, involved in the biosynthesis of isopentenyl diphosphate (IPP) and dimethylallyl diphosphate (DMAPP), two major building blocks of isoprenoid compounds. Catalyzes the conversion of 4-diphosphocytidyl-2-C-methyl-D-erythritol 2-phosphate (CDP-ME2P) to 2-C-methyl-D-erythritol 2,4-cyclodiphosphate (ME-CPP) with a corresponding release of cytidine 5-monophosphate (CMP). The protein is 2-C-methyl-D-erythritol 2,4-cyclodiphosphate synthase of Porphyromonas gingivalis (strain ATCC 33277 / DSM 20709 / CIP 103683 / JCM 12257 / NCTC 11834 / 2561).